The primary structure comprises 145 residues: Putative antiporter subunit mnhG2 (145 aa).

The next 3 membrane-spanning stretches (helical) occupy residues 11–31, 51–71, and 72–92; these read IAAV…IGIV, VLLT…FFSV, and RLLL…HLVA.

This sequence belongs to the CPA3 antiporters (TC 2.A.63) subunit G family. As to quaternary structure, may form a heterooligomeric complex that consists of seven subunits: mnhA2, mnhB2, mnhC2, mnhD2, mnhE2, mnhF2 and mnhG2.

Its subcellular location is the cell membrane. In Staphylococcus aureus (strain bovine RF122 / ET3-1), this protein is Putative antiporter subunit mnhG2 (mnhG2).